A 130-amino-acid chain; its full sequence is uncharacterized protein (130 aa).

Positions 1-19 (MLAPLFLCCLRNLFRKLIS) are cleaved as a signal peptide.

It localises to the secreted. This is an uncharacterized protein from Homo sapiens (Human).